Consider the following 78-residue polypeptide: Large ribosomal subunit protein bL28 (78 aa).

It belongs to the bacterial ribosomal protein bL28 family.

The protein is Large ribosomal subunit protein bL28 of Nostoc sp. (strain PCC 7120 / SAG 25.82 / UTEX 2576).